Here is a 118-residue protein sequence, read N- to C-terminus: Small ribosomal subunit protein eS24 (118 aa).

This sequence belongs to the eukaryotic ribosomal protein eS24 family.

This Sulfolobus acidocaldarius (strain ATCC 33909 / DSM 639 / JCM 8929 / NBRC 15157 / NCIMB 11770) protein is Small ribosomal subunit protein eS24.